A 360-amino-acid polypeptide reads, in one-letter code: Probable cinnamyl alcohol dehydrogenase 1 (360 aa).

Residue C47 participates in Zn(2+) binding. T49 serves as a coordination point for NADP(+). Residues H69, E70, C100, C103, C106, C114, and C163 each coordinate Zn(2+). NADP(+)-binding positions include T167, 189–194, 212–217, T252, G276, and 299–301; these read GLGGVG, SSSDKK, and SFI.

It belongs to the zinc-containing alcohol dehydrogenase family. In terms of assembly, homodimer. Zn(2+) serves as cofactor.

It catalyses the reaction (E)-cinnamyl alcohol + NADP(+) = (E)-cinnamaldehyde + NADPH + H(+). The catalysed reaction is (E)-coniferol + NADP(+) = (E)-coniferaldehyde + NADPH + H(+). The enzyme catalyses (E)-sinapyl alcohol + NADP(+) = (E)-sinapaldehyde + NADPH + H(+). It carries out the reaction (E)-4-coumaroyl alcohol + NADP(+) = (E)-4-coumaraldehyde + NADPH + H(+). It catalyses the reaction (E)-caffeyl alcohol + NADP(+) = (E)-caffeyl aldehyde + NADPH + H(+). Its pathway is aromatic compound metabolism; phenylpropanoid biosynthesis. Involved in lignin biosynthesis. Catalyzes the final step specific for the production of lignin monomers. Catalyzes the NADPH-dependent reduction of coniferaldehyde, 5-hydroxyconiferaldehyde, sinapaldehyde, 4-coumaraldehyde and caffeyl aldehyde to their respective alcohols. In Aralia cordata (Udo), this protein is Probable cinnamyl alcohol dehydrogenase 1 (CAD1).